The primary structure comprises 346 residues: Flap endonuclease 1 (346 aa).

An N-domain region spans residues 1–102 (MGVTELGKLI…AEIEERRKTR (102 aa)). Aspartate 31, aspartate 84, glutamate 156, glutamate 158, aspartate 177, aspartate 179, and aspartate 239 together coordinate Mg(2+). Positions 120–261 (DVAKYAKRAV…KALKLIWEFG (142 aa)) are I-domain.

This sequence belongs to the XPG/RAD2 endonuclease family. FEN1 subfamily. Interacts with PCNA. PCNA stimulates the nuclease activity without altering cleavage specificity. The cofactor is Mg(2+).

Structure-specific nuclease with 5'-flap endonuclease and 5'-3' exonuclease activities involved in DNA replication and repair. During DNA replication, cleaves the 5'-overhanging flap structure that is generated by displacement synthesis when DNA polymerase encounters the 5'-end of a downstream Okazaki fragment. Binds the unpaired 3'-DNA end and kinks the DNA to facilitate 5' cleavage specificity. Cleaves one nucleotide into the double-stranded DNA from the junction in flap DNA, leaving a nick for ligation. Also involved in the base excision repair (BER) pathway. Acts as a genome stabilization factor that prevents flaps from equilibrating into structures that lead to duplications and deletions. Also possesses 5'-3' exonuclease activity on nicked or gapped double-stranded DNA. This Pyrobaculum aerophilum (strain ATCC 51768 / DSM 7523 / JCM 9630 / CIP 104966 / NBRC 100827 / IM2) protein is Flap endonuclease 1.